Here is a 272-residue protein sequence, read N- to C-terminus: HMP-PP phosphatase (272 aa).

The active-site Nucleophile is the D8. 3 residues coordinate Mg(2+): D8, D10, and D212.

This sequence belongs to the HAD-like hydrolase superfamily. Cof family. Requires Mg(2+) as cofactor.

It carries out the reaction 4-amino-2-methyl-5-(diphosphooxymethyl)pyrimidine + H2O = 4-amino-2-methyl-5-(phosphooxymethyl)pyrimidine + phosphate + H(+). Its function is as follows. Catalyzes the hydrolysis of 4-amino-2-methyl-5-hydroxymethylpyrimidine pyrophosphate (HMP-PP) to 4-amino-2-methyl-5-hydroxymethylpyrimidine phosphate (HMP-P). The protein is HMP-PP phosphatase of Cronobacter sakazakii (strain ATCC BAA-894) (Enterobacter sakazakii).